A 366-amino-acid polypeptide reads, in one-letter code: Beta sliding clamp (366 aa).

The segment at 1-125 (MKFTVEREHL…FPNLDDWQSE (125 aa)) is i. The tract at residues 126 to 253 (VEFTLPQATM…YRRVLPKNPD (128 aa)) is II. Residues 254 to 366 (KHLEAGCDLL…AAYVVMPMRL (113 aa)) are III.

Belongs to the beta sliding clamp family. Forms a ring-shaped head-to-tail homodimer around DNA which binds and tethers DNA polymerases and other proteins to the DNA. The DNA replisome complex has a single clamp-loading complex (3 tau and 1 each of delta, delta', psi and chi subunits) which binds 3 Pol III cores (1 core on the leading strand and 2 on the lagging strand) each with a beta sliding clamp dimer. Additional proteins in the replisome are other copies of gamma, psi and chi, Ssb, DNA helicase and RNA primase.

The protein localises to the cytoplasm. In terms of biological role, confers DNA tethering and processivity to DNA polymerases and other proteins. Acts as a clamp, forming a ring around DNA (a reaction catalyzed by the clamp-loading complex) which diffuses in an ATP-independent manner freely and bidirectionally along dsDNA. Initially characterized for its ability to contact the catalytic subunit of DNA polymerase III (Pol III), a complex, multichain enzyme responsible for most of the replicative synthesis in bacteria; Pol III exhibits 3'-5' exonuclease proofreading activity. The beta chain is required for initiation of replication as well as for processivity of DNA replication. In Escherichia coli O157:H7, this protein is Beta sliding clamp (dnaN).